The primary structure comprises 686 residues: MLPKSVLIVAFLVASSSAQYGVTGMYENLPLESTTVEASGEGSGYNESNDDGFVTGADAVAIDTDCSTKEDGLYAIGGCSPQFLTCSGGIARIMDCPANLIYDQRIIACEYSYNVPECSGVPQDVSSTQAYYPATEETTPAENVTVPAETTVDPYAPVEVATTAAPSEDVPVETTASPYAPVEVETTTAPAEDVTVPEETTVAPYAPVEVYTTAAPANDEPVTRTLLDKTCNGKADGFYSFGQCSDHYIACSNGYTIPMQCPARLSFDEARVICDYTMNVPECQNGSGNYEGSAEETTTEASGELPYSNGYGYEETTTAAADVPSTEGYAPETTAEAWVAPYRLESTTAADVPTTTVGYAPEVIEETTTSEYVEETTTAADVSTTTTVEYVPEVTETTTAPYVEETTTAEYVEETTTAADVPTTTTVAYAPEVTETTTVPYIEETTTVEEATTAADVPTTTGYVPEVIETTTTPYVEETTTAEYVEETSTAADVPTTTTVAYAPEVTETTTVPYIEETTTVEEATTAADVPTTTGYVPEVIETTTTPYVEETTTVEETTTTTVAYAPEVVETTTTPYVEESTTTPYVEETTTALMFHPPQSKATKLPQIHHPASKEHLLSSHAHKTIETVSMDMNLSSSASRDSSSLQSKDDAQLLTKLRSATNRTSTKEATTRTQNMHAHYHRNH.

Positions 1 to 18 (MLPKSVLIVAFLVASSSA) are cleaved as a signal peptide. A glycan (N-linked (GlcNAc...) asparagine) is linked at Asn-46. The Chitin-binding type-2 1 domain maps to 63–120 (DTDCSTKEDGLYAIGGCSPQFLTCSGGIARIMDCPANLIYDQRIIACEYSYNVPECSG). Cysteines 96 and 109 form a disulfide. Residue Asn-143 is glycosylated (N-linked (GlcNAc...) asparagine). The region spanning 228–285 (DKTCNGKADGFYSFGQCSDHYIACSNGYTIPMQCPARLSFDEARVICDYTMNVPECQN) is the Chitin-binding type-2 2 domain. A disulfide bridge links Cys-261 with Cys-274. Residues 284–312 (QNGSGNYEGSAEETTTEASGELPYSNGYG) are disordered. N-linked (GlcNAc...) asparagine glycans are attached at residues Asn-285, Asn-635, and Asn-664. Positions 658-686 (KLRSATNRTSTKEATTRTQNMHAHYHRNH) are disordered.

In terms of biological role, required for polar body extrusion during cytokinesis in embryo development. Affects cortical granule size. Shown to have roles in meiotic chromosome segregation, osmotic barrier function and polarization in conjunction with cpg-2. Binds chitin. The chain is Chondroitin proteoglycan 1 (cpg-1) from Caenorhabditis briggsae.